We begin with the raw amino-acid sequence, 340 residues long: Deubiquitinase SseL (340 aa).

Residue His223 is part of the active site. Cys285 functions as the Nucleophile in the catalytic mechanism.

The protein belongs to the peptidase C79 family.

The protein resides in the secreted. The protein localises to the host cytoplasm. Its function is as follows. Effector proteins function to alter host cell physiology and promote bacterial survival in host tissues. This protease targets the host cell ubiquitin pathway by acting as a deubiquitinase in infected host cells. The protein is Deubiquitinase SseL (sseL) of Salmonella paratyphi B (strain ATCC BAA-1250 / SPB7).